The primary structure comprises 358 residues: Peptide chain release factor 1 (358 aa).

N5-methylglutamine is present on Gln-236.

This sequence belongs to the prokaryotic/mitochondrial release factor family. Post-translationally, methylated by PrmC. Methylation increases the termination efficiency of RF1.

The protein localises to the cytoplasm. Functionally, peptide chain release factor 1 directs the termination of translation in response to the peptide chain termination codons UAG and UAA. The chain is Peptide chain release factor 1 from Corynebacterium glutamicum (strain ATCC 13032 / DSM 20300 / JCM 1318 / BCRC 11384 / CCUG 27702 / LMG 3730 / NBRC 12168 / NCIMB 10025 / NRRL B-2784 / 534).